A 372-amino-acid polypeptide reads, in one-letter code: Cytochrome b (372 aa).

A run of 4 helical transmembrane segments spans residues 25–45, 69–90, 105–125, and 170–190; these read FGSMLLTCLILQITTGFFLAI, WIMQNLHAIGASMFFICIYIHI, WLSGTALLILLMATAFFGYVL, and FFALHFILPFTIISMSSIHII. 2 residues coordinate heme b: histidine 75 and histidine 89. Histidine 174 and histidine 188 together coordinate heme b. Histidine 193 is a binding site for a ubiquinone. 4 consecutive transmembrane segments (helical) span residues 218-238, 280-300, 312-332, and 339-358; these read YKDMLMITIMITFMLLILSFS, LGGTLALFMSIAILMTAPFTH, LTQTMFWILIATFITITWTAT, and FISISQVTSIIYFSFFIINP.

It belongs to the cytochrome b family. In terms of assembly, the cytochrome bc1 complex contains 3 respiratory subunits (MT-CYB, CYC1 and UQCRFS1), 2 core proteins (UQCRC1 and UQCRC2) and probably 6 low-molecular weight proteins. Requires heme b as cofactor.

It is found in the mitochondrion inner membrane. Functionally, component of the ubiquinol-cytochrome c reductase complex (complex III or cytochrome b-c1 complex) that is part of the mitochondrial respiratory chain. The b-c1 complex mediates electron transfer from ubiquinol to cytochrome c. Contributes to the generation of a proton gradient across the mitochondrial membrane that is then used for ATP synthesis. In Dendroaspis polylepis polylepis (Black mamba), this protein is Cytochrome b (MT-CYB).